The following is a 239-amino-acid chain: tRNA uridine(34) hydroxylase (239 aa).

Positions 124 to 214 (QGRELVMLDT…GILKYFEETD (91 aa)) constitute a Rhodanese domain. Residue C178 is the Cysteine persulfide intermediate of the active site.

It belongs to the TrhO family.

The catalysed reaction is uridine(34) in tRNA + AH2 + O2 = 5-hydroxyuridine(34) in tRNA + A + H2O. Functionally, catalyzes oxygen-dependent 5-hydroxyuridine (ho5U) modification at position 34 in tRNAs. This Bordetella parapertussis (strain 12822 / ATCC BAA-587 / NCTC 13253) protein is tRNA uridine(34) hydroxylase.